The chain runs to 193 residues: Phosphoheptose isomerase (193 aa).

Residues 37 to 193 (LADSFKAGGK…QLIEKEMVKA (157 aa)) form the SIS domain. 52-54 (NGG) serves as a coordination point for substrate. Zn(2+)-binding residues include H61 and E65. Substrate contacts are provided by residues E65, 93–94 (ND), 119–121 (STS), S124, and Q172. The Zn(2+) site is built by Q172 and H180.

It belongs to the SIS family. GmhA subfamily. As to quaternary structure, homotetramer. Zn(2+) serves as cofactor.

It is found in the cytoplasm. It catalyses the reaction 2 D-sedoheptulose 7-phosphate = D-glycero-alpha-D-manno-heptose 7-phosphate + D-glycero-beta-D-manno-heptose 7-phosphate. Its pathway is carbohydrate biosynthesis; D-glycero-D-manno-heptose 7-phosphate biosynthesis; D-glycero-alpha-D-manno-heptose 7-phosphate and D-glycero-beta-D-manno-heptose 7-phosphate from sedoheptulose 7-phosphate: step 1/1. Catalyzes the isomerization of sedoheptulose 7-phosphate in D-glycero-D-manno-heptose 7-phosphate. This Yersinia enterocolitica serotype O:8 / biotype 1B (strain NCTC 13174 / 8081) protein is Phosphoheptose isomerase.